The following is a 93-amino-acid chain: Alpha-defensin 13 (93 aa).

Residues methionine 1–alanine 19 form the signal peptide. A propeptide spanning residues aspartate 20–serine 58 is cleaved from the precursor. The disordered stretch occupies residues isoleucine 22–leucine 54. Cystine bridges form between cysteine 64–cysteine 92, cysteine 66–cysteine 81, and cysteine 71–cysteine 91.

The protein belongs to the alpha-defensin family. As to expression, paneth cells of the small bowel.

The protein resides in the secreted. In terms of biological role, probably contributes to the antimicrobial barrier function of the small bowel mucosa. The sequence is that of Alpha-defensin 13 (Defa13) from Mus musculus (Mouse).